We begin with the raw amino-acid sequence, 445 residues long: Chromosomal replication initiator protein DnaA (445 aa).

Residues 1 to 73 (MSTHLTETWE…VNALKLLTSK (73 aa)) are domain I, interacts with DnaA modulators. The interval 73 to 106 (KKYNIDFIVTTEEKIEKNHNNEKSNIVVNDEMST) is domain II. The domain III, AAA+ region stretch occupies residues 107-323 (MLNPKYTFDS…GALIRIVAFS (217 aa)). Positions 151, 153, 154, and 155 each coordinate ATP. The domain IV, binds dsDNA stretch occupies residues 324–445 (SLTNKEISVD…KELNKRINQK (122 aa)).

Belongs to the DnaA family. In terms of assembly, oligomerizes as a right-handed, spiral filament on DNA at oriC.

It localises to the cytoplasm. Plays an essential role in the initiation and regulation of chromosomal replication. ATP-DnaA binds to the origin of replication (oriC) to initiate formation of the DNA replication initiation complex once per cell cycle. Binds the DnaA box (a 9 base pair repeat at the origin) and separates the double-stranded (ds)DNA. Forms a right-handed helical filament on oriC DNA; dsDNA binds to the exterior of the filament while single-stranded (ss)DNA is stabiized in the filament's interior. The ATP-DnaA-oriC complex binds and stabilizes one strand of the AT-rich DNA unwinding element (DUE), permitting loading of DNA polymerase. After initiation quickly degrades to an ADP-DnaA complex that is not apt for DNA replication. Binds acidic phospholipids. The polypeptide is Chromosomal replication initiator protein DnaA (Clostridium botulinum (strain Okra / Type B1)).